Here is a 301-residue protein sequence, read N- to C-terminus: Cilia- and flagella-associated protein 161 (301 aa).

Residues 269 to 301 (GNPRDASSSMLDLPKPPTEDTRAMEQAMGLDTQ) are disordered.

As to quaternary structure, microtubule inner protein component of sperm flagellar doublet microtubules. Expressed in airway epithelial cells.

The protein resides in the cytoplasm. Its subcellular location is the cytoskeleton. It localises to the cilium axoneme. It is found in the flagellum axoneme. Microtubule inner protein (MIP) part of the dynein-decorated doublet microtubules (DMTs) in cilia axoneme, which is required for motile cilia beating. This Homo sapiens (Human) protein is Cilia- and flagella-associated protein 161.